A 224-amino-acid chain; its full sequence is Transcriptional regulatory protein DltR (224 aa).

The Response regulatory domain maps to 2–116; it reads RLLVVEDEKS…ELLARIRLRT (115 aa). A 4-aspartylphosphate modification is found at D51. The segment at residues 124–222 is a DNA-binding region (ompR/PhoB-type); the sequence is ANQLRLGNIR…TKGFGYSLEE (99 aa).

In terms of processing, phosphorylated by DltS.

The protein localises to the cytoplasm. Functionally, member of the two-component regulatory system DltS/DltR. Regulates the expression of the dlt operon. The sequence is that of Transcriptional regulatory protein DltR (dltR) from Streptococcus agalactiae serotype III (strain NEM316).